The following is a 234-amino-acid chain: Eosinophil granule major basic protein 2 (234 aa).

The signal sequence occupies residues 1 to 15; that stretch reads MKLLLLLALLVGAVS. A propeptide spans 16–115 (acidic); that stretch reads TRHLNVDTSS…VKFEGSPGCK (100 aa). The interval 26-96 is disordered; that stretch reads LQSLQGEESL…SSELDMGPED (71 aa). Residue serine 69 is glycosylated (O-linked (Xyl...) (glycosaminoglycan) serine). Over residues 71 to 94 the composition is skewed to acidic residues; the sequence is SEDDPEEEEEEKEMESSSELDMGP. One can recognise a C-type lectin domain in the interval 133–234; it reads SVCQRCFRGN…GVRRAFSCSY (102 aa). 2 disulfides stabilise this stretch: cysteine 135–cysteine 232 and cysteine 209–cysteine 224.

Nitrated.

It is found in the cytoplasmic granule. Its function is as follows. MBP may play some important roles in the allergic reactions and inflammations, since MBP is capable of releasing histamine from mast cells and damaging the epithelial cells of bronchial tubes. Antiparasitic and antibiotic. This chain is Eosinophil granule major basic protein 2 (MBP2), found in Cavia porcellus (Guinea pig).